Here is a 158-residue protein sequence, read N- to C-terminus: Transcriptional regulatory protein DoeX (158 aa).

In terms of domain architecture, HTH asnC-type spans 3-64 (LDRYDLKILE…RLNTDVLVKR (62 aa)). The H-T-H motif DNA-binding region spans 22–41 (KSKLAEAINLSVSPCWERVR).

It is found in the cytoplasm. Its function is as follows. Acts as a transcriptional regulator. It binds DNA specifically to a fragment from the doeA promoter region. This Halomonas elongata (strain ATCC 33173 / DSM 2581 / NBRC 15536 / NCIMB 2198 / 1H9) protein is Transcriptional regulatory protein DoeX (doeX).